The primary structure comprises 643 residues: Threonine--tRNA ligase (643 aa).

Residues 1–61 enclose the TGS domain; it reads MPIITLPDGS…EQDATLEIIT (61 aa). Positions 243-534 are catalytic; the sequence is DHRKIGKALD…ITEEYAGFFP (292 aa). Zn(2+) is bound by residues Cys334, His385, and His511.

Belongs to the class-II aminoacyl-tRNA synthetase family. In terms of assembly, homodimer. Requires Zn(2+) as cofactor.

The protein resides in the cytoplasm. The enzyme catalyses tRNA(Thr) + L-threonine + ATP = L-threonyl-tRNA(Thr) + AMP + diphosphate + H(+). Its function is as follows. Catalyzes the attachment of threonine to tRNA(Thr) in a two-step reaction: L-threonine is first activated by ATP to form Thr-AMP and then transferred to the acceptor end of tRNA(Thr). Also edits incorrectly charged L-seryl-tRNA(Thr). This Haemophilus influenzae (strain ATCC 51907 / DSM 11121 / KW20 / Rd) protein is Threonine--tRNA ligase.